The sequence spans 672 residues: Glycine--tRNA ligase beta subunit (672 aa).

Belongs to the class-II aminoacyl-tRNA synthetase family. Tetramer of two alpha and two beta subunits.

It localises to the cytoplasm. The catalysed reaction is tRNA(Gly) + glycine + ATP = glycyl-tRNA(Gly) + AMP + diphosphate. The sequence is that of Glycine--tRNA ligase beta subunit (glyS) from Thermotoga maritima (strain ATCC 43589 / DSM 3109 / JCM 10099 / NBRC 100826 / MSB8).